A 377-amino-acid polypeptide reads, in one-letter code: 1-deoxy-D-xylulose 5-phosphate reductoisomerase (377 aa).

Positions 20, 21, 23, 46, and 115 each coordinate NADPH. Lys116 contributes to the 1-deoxy-D-xylulose 5-phosphate binding site. Residue Glu117 coordinates NADPH. Asp141 is a binding site for Mn(2+). 1-deoxy-D-xylulose 5-phosphate contacts are provided by Ser142, Glu143, Ser166, and His189. Glu143 contacts Mn(2+). Residue Gly195 coordinates NADPH. The 1-deoxy-D-xylulose 5-phosphate site is built by Ser202, Asn207, Lys208, and Glu211. Glu211 serves as a coordination point for Mn(2+).

This sequence belongs to the DXR family. Requires Mg(2+) as cofactor. The cofactor is Mn(2+).

The enzyme catalyses 2-C-methyl-D-erythritol 4-phosphate + NADP(+) = 1-deoxy-D-xylulose 5-phosphate + NADPH + H(+). It participates in isoprenoid biosynthesis; isopentenyl diphosphate biosynthesis via DXP pathway; isopentenyl diphosphate from 1-deoxy-D-xylulose 5-phosphate: step 1/6. Catalyzes the NADPH-dependent rearrangement and reduction of 1-deoxy-D-xylulose-5-phosphate (DXP) to 2-C-methyl-D-erythritol 4-phosphate (MEP). The protein is 1-deoxy-D-xylulose 5-phosphate reductoisomerase of Malacoplasma penetrans (strain HF-2) (Mycoplasma penetrans).